The chain runs to 435 residues: ATP-dependent protease ATPase subunit HslU (435 aa).

Residues Ile18, 60–65 (GVGKTE), Asp248, Glu313, and Arg385 contribute to the ATP site.

The protein belongs to the ClpX chaperone family. HslU subfamily. As to quaternary structure, a double ring-shaped homohexamer of HslV is capped on each side by a ring-shaped HslU homohexamer. The assembly of the HslU/HslV complex is dependent on binding of ATP.

The protein resides in the cytoplasm. ATPase subunit of a proteasome-like degradation complex; this subunit has chaperone activity. The binding of ATP and its subsequent hydrolysis by HslU are essential for unfolding of protein substrates subsequently hydrolyzed by HslV. HslU recognizes the N-terminal part of its protein substrates and unfolds these before they are guided to HslV for hydrolysis. This chain is ATP-dependent protease ATPase subunit HslU, found in Rhizobium meliloti (strain 1021) (Ensifer meliloti).